Here is a 141-residue protein sequence, read N- to C-terminus: uncharacterized protein (141 aa).

This is an uncharacterized protein from Arabidopsis thaliana (Mouse-ear cress).